The primary structure comprises 428 residues: Ammonium transporter AmtB (428 aa).

Residues 1–22 form the signal peptide; the sequence is MKIATIKTGLASLAMLPGLVMA. The Periplasmic segment spans residues 23–32; it reads APAVADKADN. The chain crosses the membrane as a helical span at residues 33–54; sequence AFMMICTALVLFMTIPGIALFY. Residues 55 to 65 lie on the Cytoplasmic side of the membrane; it reads GGLIRGKNVLS. The chain crosses the membrane as a helical span at residues 66–90; that stretch reads MLTQVTVTFALVCILWVVYGYSLAF. Residues 91–119 are Periplasmic-facing; that stretch reads GEGNNFFGNINWLMLKNIELTAVMGSIYQ. The chain crosses the membrane as a helical span at residues 120–142; the sequence is YIHVAFQGSFACITVGLIVGALA. At 143–146 the chain is on the cytoplasmic side; sequence ERIR. The chain crosses the membrane as a helical span at residues 147-171; it reads FSAVLIFVVVWLTLSYIPIAHMVWG. At 172-185 the chain is on the periplasmic side; the sequence is GGLLASHGALDFAG. Residues 186–201 form a helical membrane-spanning segment; the sequence is GTVVHINAAIAGLVGA. The Cytoplasmic segment spans residues 202 to 221; that stretch reads YLIGKRVGFGKEAFKPHNLP. A helical membrane pass occupies residues 222–241; the sequence is MVFTGTAILYIGWFGFNAGS. Serine 241 is an NH4(+) binding site. Over 242–248 the chain is Periplasmic; the sequence is AGTANEI. The chain crosses the membrane as a helical span at residues 249–273; that stretch reads AALAFVNTVVATAAAILGWIFGEWA. Topologically, residues 274–279 are cytoplasmic; that stretch reads LRGKPS. A helical membrane pass occupies residues 280-300; sequence LLGACSGAIAGLVGVTPACGY. The Periplasmic segment spans residues 301 to 302; sequence IG. A helical transmembrane segment spans residues 303–321; the sequence is VGGALIIGVVAGLAGLWGV. The Cytoplasmic segment spans residues 322–333; the sequence is TMLKRLLRVDDP. Residues 334 to 355 traverse the membrane as a helical segment; that stretch reads CDVFGVHGVCGIVGCIMTGIFA. The Periplasmic segment spans residues 356–370; the sequence is ASSLGGVGFAEGVTM. The chain crosses the membrane as a helical span at residues 371 to 399; the sequence is GHQLLVQLESIAITIVWSGVVAFIGYKLA. The Cytoplasmic portion of the chain corresponds to 400 to 428; it reads DLTVGLRVPEEQEREGLDVNSHGENAYNA.

It belongs to the ammonia transporter channel (TC 1.A.11.2) family. In terms of assembly, homotrimer. In response to elevation of the extracellular ammonium concentration, interacts and forms a complex with GlnK.

Its subcellular location is the cell inner membrane. In the presence of high extracellular ammonium concentrations, transport activity is inhibited by interaction with the regulatory protein GlnK. Formation of the GlnK-AmtB complex is influenced by intracellular pools of the effector molecules ATP, ADP, Mg(2+) and 2-oxoglutarate. The GlnK-AmtB interaction is also controlled by the level of intracellular glutamine and the uridylylation status of GlnK. Functionally, involved in the uptake of ammonium/ammonia (NH(4)(+)/NH(3)). Transport is electrogenic. Following sequestration of NH(4)(+) at the periplasmic face, NH(4)(+) is deprotonated and neutral NH(3) is transported into the cytoplasm. Neutral NH(3) and charged H(+) are carried separately across the membrane on a unique two-lane pathway, before recombining to NH(4)(+) inside the cell. The sequence is that of Ammonium transporter AmtB (amtB) from Escherichia coli O157:H7.